A 338-amino-acid chain; its full sequence is Glyceraldehyde-3-phosphate dehydrogenase (338 aa).

Residues 12 to 13, D34, and R79 each bind NAD(+); that span reads RI. Residues 150–152, T181, 210–211, and R233 contribute to the D-glyceraldehyde 3-phosphate site; these read SCT and TG. C151 functions as the Nucleophile in the catalytic mechanism. N316 contributes to the NAD(+) binding site.

Belongs to the glyceraldehyde-3-phosphate dehydrogenase family. Homotetramer.

The protein localises to the cytoplasm. It catalyses the reaction D-glyceraldehyde 3-phosphate + phosphate + NAD(+) = (2R)-3-phospho-glyceroyl phosphate + NADH + H(+). Its pathway is carbohydrate degradation; glycolysis; pyruvate from D-glyceraldehyde 3-phosphate: step 1/5. This chain is Glyceraldehyde-3-phosphate dehydrogenase (GPD), found in Phaffia rhodozyma (Yeast).